Here is a 216-residue protein sequence, read N- to C-terminus: Adenylate kinase (216 aa).

10 to 15 is an ATP binding site; that stretch reads GAGKGT. The segment at 30–59 is NMP; sequence STGDMFRAAMKAETELGLQAKSFIDKGALV. AMP-binding positions include threonine 31, arginine 36, 57–59, 85–88, and glutamine 92; these read ALV and GFPR. An LID region spans residues 126–163; that stretch reads GRRICKECGATYHLEFNPPAKADVCDKCGGELYQRSDD. ATP is bound at residue arginine 127. Zn(2+)-binding residues include cysteine 130 and cysteine 133. Residue 136 to 137 coordinates ATP; it reads TY. The Zn(2+) site is built by cysteine 150 and cysteine 153. Positions 160 and 171 each coordinate AMP. Glutamine 199 lines the ATP pocket.

Belongs to the adenylate kinase family. Monomer.

The protein localises to the cytoplasm. The enzyme catalyses AMP + ATP = 2 ADP. The protein operates within purine metabolism; AMP biosynthesis via salvage pathway; AMP from ADP: step 1/1. In terms of biological role, catalyzes the reversible transfer of the terminal phosphate group between ATP and AMP. Plays an important role in cellular energy homeostasis and in adenine nucleotide metabolism. The sequence is that of Adenylate kinase from Bacillus mycoides (strain KBAB4) (Bacillus weihenstephanensis).